The sequence spans 316 residues: Transaldolase (316 aa).

The Schiff-base intermediate with substrate role is filled by lysine 132.

Belongs to the transaldolase family. Type 1 subfamily. As to quaternary structure, homodimer.

Its subcellular location is the cytoplasm. It catalyses the reaction D-sedoheptulose 7-phosphate + D-glyceraldehyde 3-phosphate = D-erythrose 4-phosphate + beta-D-fructose 6-phosphate. It functions in the pathway carbohydrate degradation; pentose phosphate pathway; D-glyceraldehyde 3-phosphate and beta-D-fructose 6-phosphate from D-ribose 5-phosphate and D-xylulose 5-phosphate (non-oxidative stage): step 2/3. Transaldolase is important for the balance of metabolites in the pentose-phosphate pathway. The chain is Transaldolase from Aliivibrio fischeri (strain MJ11) (Vibrio fischeri).